We begin with the raw amino-acid sequence, 748 residues long: Catalase-peroxidase (748 aa).

Positions 96–229 form a cross-link, tryptophyl-tyrosyl-methioninium (Trp-Tyr) (with M-255); it reads WHSAGTYRVA…LAAAHMGLIY (134 aa). Catalysis depends on His-97, which acts as the Proton acceptor. The tryptophyl-tyrosyl-methioninium (Tyr-Met) (with W-96) cross-link spans 229 to 255; the sequence is YVNPEGPDGNPDPIAAAKDIRTTFGRM. His-270 lines the heme b pocket.

This sequence belongs to the peroxidase family. Peroxidase/catalase subfamily. As to quaternary structure, homodimer or homotetramer. Heme b serves as cofactor. Formation of the three residue Trp-Tyr-Met cross-link is important for the catalase, but not the peroxidase activity of the enzyme.

It is found in the cytoplasm. The enzyme catalyses H2O2 + AH2 = A + 2 H2O. The catalysed reaction is 2 H2O2 = O2 + 2 H2O. In terms of biological role, bifunctional enzyme with both catalase and broad-spectrum peroxidase activity. Plays a crucial role in oxidative stress response during infection. Acts as an antigen and elicits antibody response in P.marneffei-infected AIDS patients, healthy people working in mycological laboratory, and healthy people in an endemic area. The polypeptide is Catalase-peroxidase (Talaromyces marneffei (Penicillium marneffei)).